The sequence spans 321 residues: Oxidoreductase P35 (321 aa).

It belongs to the Gfo/Idh/MocA family.

Its subcellular location is the cell surface. Oxidoreductase that may be involved in ulvan degradation. Ulvan is the main polysaccharide component of the Ulvales (green seaweed) cell wall. It is composed of disaccharide building blocks comprising 3-sulfated rhamnose (Rha3S) linked to D-glucuronic acid (GlcA), L-iduronic acid (IduA), or D-xylose (Xyl). The chain is Oxidoreductase P35 from Formosa agariphila (strain DSM 15362 / KCTC 12365 / LMG 23005 / KMM 3901 / M-2Alg 35-1).